The chain runs to 308 residues: Uridylate cyclase (308 aa).

Mn(2+) is bound by residues Asp-62 and Asp-106.

Belongs to the adenylyl cyclase class-4/guanylyl cyclase family. Pyrimidine cyclase subfamily. As to quaternary structure, homodimer. The cofactor is Mn(2+).

It is found in the cytoplasm. It carries out the reaction GTP = 3',5'-cyclic GMP + diphosphate. The enzyme catalyses UTP = 3',5'-cyclic UMP + diphosphate. Its function is as follows. Pycsar (pyrimidine cyclase system for antiphage resistance) provides immunity against bacteriophage. The pyrimidine cyclase (PycC) synthesizes cyclic nucleotides in response to infection; these serve as specific second messenger signals. The signals activate the adjacent effector, leading to bacterial cell death and abortive phage infection. A clade D Pycsar system. In terms of biological role, the pyrimidine cyclase gene of a two-gene Pycsar system, generates cyclic UMP (cUMP) from UTP as well as cGMP from GTP to a lesser extent, has little to no activity on ATP or CTP. Expression of this and adjacent effector PtPycTM (AC A0A4Q9KQH5) probably confers resistance to bacteriophage. The genes are probably only expressed in response to bacteriophage infection. The sequence is that of Uridylate cyclase from Propioniciclava tarda.